The sequence spans 594 residues: Tripeptidyl-peptidase sed4 (594 aa).

An N-terminal signal peptide occupies residues 1–20; the sequence is MLSSTLYAGWLLSLAAPALC. Residues 21–187 constitute a propeptide, removed in mature form; it reads VVQEKLSAVP…AVKLPALPRR (167 aa). N-linked (GlcNAc...) asparagine glycans are attached at residues N191, N229, and N250. The region spanning 197-594 is the Peptidase S53 domain; it reads LITPDCLVEM…MKLKELVLSL (398 aa). Residues E272, D276, and S494 each act as charge relay system in the active site. Ca(2+) contacts are provided by D536 and I537. N568 is a glycosylation site (N-linked (GlcNAc...) asparagine). Residues G572 and D574 each coordinate Ca(2+).

It depends on Ca(2+) as a cofactor. N-glycosylated.

It localises to the secreted. The protein localises to the extracellular space. The catalysed reaction is Release of an N-terminal tripeptide from a polypeptide.. Secreted tripeptidyl-peptidase which degrades proteins at acidic pHs and is involved in virulence. The protein is Tripeptidyl-peptidase sed4 (sed4) of Aspergillus fumigatus (strain ATCC MYA-4609 / CBS 101355 / FGSC A1100 / Af293) (Neosartorya fumigata).